A 383-amino-acid chain; its full sequence is Probable lipid transporter atnI (383 aa).

2 helical membrane passes run 46–66 and 71–91; these read VLFS…AIMF and AWVV…RSLF. N94 carries an N-linked (GlcNAc...) asparagine glycan. The next 5 membrane-spanning stretches (helical) occupy residues 104-124, 144-164, 182-202, 231-251, and 269-289; these read FTIF…MTLG, FGHI…VGAA, IYMG…GLFI, WLFY…IFRL, and WFEY…LNVA. A disordered region spans residues 305-383; sequence VSRKEKKQRK…YDNRGNEVRP (79 aa). Residues 307 to 316 show a composition bias toward basic residues; it reads RKEKKQRKRE. The segment covering 317–329 has biased composition (basic and acidic residues); that stretch reads KKEAKIAEKEAKK.

Belongs to the lipid-translocating exporter (LTE) (TC 9.A.26.1) family.

It localises to the membrane. The protein operates within secondary metabolite biosynthesis. In terms of biological role, probable lipid transporter; part of the gene cluster that mediates the biosynthesis of aspercryptins, linear lipopeptides built from six amino acids including 2 highly unusual and nonproteogenic amino acids, 2-amino-octanoic acid (2aoa) and 2-amino-dodecanol (2adol). The core structure of aspercryptins is as follows: Ser/Ala-Thr-Ile/Val-2aoa-Asn-2adol. The first step of aspercryptin biosynthesis is the generation of the fatty acid precursors, octanoic and dodecanoic acids, by the FAS subunits atnF and atnM. The fatty acid precursors are likely transformed into the corresponding alpha-amino fatty acids in three steps. First, they are hydroxylated by the cytochrome P450 monooxygenase atnE, then oxidized to the corresponding alpha-keto acids by the NAD(P)-dependent oxidoreductase atnD, and finally converted to the alpha-amino fatty acids by the PLP-dependent aminotransferases atnH or atnJ. the alpha-amino fatty acids, 2-amino-octanoic and 2-amino-dodecanoic acids, are recognized, activated, and covalently tethered to the NRPS atnA by its fourth and sixth adenylation domains. The second module of atnA is the Thr module and contains an epimerase (E) domain responsible for the epimerization of Thr to D-allo-Thr. Additionally, despite atnA having only one epimerase domain, the first amino acid of aspercryptin A1 is D-Ser, suggesting that serine is either loaded directly as D-Ser on the first module or that the epimerase domain in the threonine module epimerizes both L-Ser and L-Thr. After condensation of the hexapeptide of aspercryptin, the C-terminal reductase (TE) domain might be involved in the reductive release and production of the aldehyde hexapeptide. Further reduction would generate aspercryptins. The variety of aspercryptins produced reflects the flexibility of the atnA NRPS, allowing incorporation of alanine instead of serine, valine for isoleucine, and a C10 fatty amino alcohol instead of the C12 version. AtnB seems to be involved in the selectivity for Ile versus Val by the third module. Moreover, type B, C and D aspercryptins have an additional N-terminal cichorine, acetyl and propionyl group respectively. The chain is Probable lipid transporter atnI from Emericella nidulans (strain FGSC A4 / ATCC 38163 / CBS 112.46 / NRRL 194 / M139) (Aspergillus nidulans).